A 475-amino-acid chain; its full sequence is Aspartyl/glutamyl-tRNA(Asn/Gln) amidotransferase subunit B (475 aa).

It belongs to the GatB/GatE family. GatB subfamily. Heterotrimer of A, B and C subunits.

It carries out the reaction L-glutamyl-tRNA(Gln) + L-glutamine + ATP + H2O = L-glutaminyl-tRNA(Gln) + L-glutamate + ADP + phosphate + H(+). The enzyme catalyses L-aspartyl-tRNA(Asn) + L-glutamine + ATP + H2O = L-asparaginyl-tRNA(Asn) + L-glutamate + ADP + phosphate + 2 H(+). In terms of biological role, allows the formation of correctly charged Asn-tRNA(Asn) or Gln-tRNA(Gln) through the transamidation of misacylated Asp-tRNA(Asn) or Glu-tRNA(Gln) in organisms which lack either or both of asparaginyl-tRNA or glutaminyl-tRNA synthetases. The reaction takes place in the presence of glutamine and ATP through an activated phospho-Asp-tRNA(Asn) or phospho-Glu-tRNA(Gln). The protein is Aspartyl/glutamyl-tRNA(Asn/Gln) amidotransferase subunit B of Staphylococcus haemolyticus (strain JCSC1435).